Consider the following 346-residue polypeptide: Magnesium-chelatase 38 kDa subunit (346 aa).

Position 34 to 41 (34 to 41 (GHRGTGKS)) interacts with ATP.

Belongs to the Mg-chelatase subunits D/I family.

It catalyses the reaction protoporphyrin IX + Mg(2+) + ATP + H2O = Mg-protoporphyrin IX + ADP + phosphate + 3 H(+). The protein operates within porphyrin-containing compound metabolism; bacteriochlorophyll biosynthesis. Involved in bacteriochlorophyll biosynthesis; introduces a magnesium ion into protoporphyrin IX to yield Mg-protoporphyrin IX. This Chlorobaculum parvum (strain DSM 263 / NCIMB 8327) (Chlorobium vibrioforme subsp. thiosulfatophilum) protein is Magnesium-chelatase 38 kDa subunit (bchI).